The chain runs to 486 residues: 2-isopropylmalate synthase (486 aa).

The region spanning 4–266 (VYIFDTTLRD…KTDVNLKEIA (263 aa)) is the Pyruvate carboxyltransferase domain. Mn(2+)-binding residues include Asp13, His201, His203, and Asn237. The interval 390–486 (KVEIIHVTSG…LSTDIIEASA (97 aa)) is regulatory domain.

This sequence belongs to the alpha-IPM synthase/homocitrate synthase family. LeuA type 1 subfamily. The cofactor is Mn(2+).

It localises to the cytoplasm. It carries out the reaction 3-methyl-2-oxobutanoate + acetyl-CoA + H2O = (2S)-2-isopropylmalate + CoA + H(+). The protein operates within amino-acid biosynthesis; L-leucine biosynthesis; L-leucine from 3-methyl-2-oxobutanoate: step 1/4. In terms of biological role, catalyzes the condensation of the acetyl group of acetyl-CoA with 3-methyl-2-oxobutanoate (2-ketoisovalerate) to form 3-carboxy-3-hydroxy-4-methylpentanoate (2-isopropylmalate). In Pyrococcus abyssi (strain GE5 / Orsay), this protein is 2-isopropylmalate synthase.